The following is a 513-amino-acid chain: ATP synthase subunit alpha 1 (513 aa).

169 to 176 (GDRQTGKT) is an ATP binding site.

This sequence belongs to the ATPase alpha/beta chains family. F-type ATPases have 2 components, CF(1) - the catalytic core - and CF(0) - the membrane proton channel. CF(1) has five subunits: alpha(3), beta(3), gamma(1), delta(1), epsilon(1). CF(0) has three main subunits: a(1), b(2) and c(9-12). The alpha and beta chains form an alternating ring which encloses part of the gamma chain. CF(1) is attached to CF(0) by a central stalk formed by the gamma and epsilon chains, while a peripheral stalk is formed by the delta and b chains.

The protein localises to the cell inner membrane. The catalysed reaction is ATP + H2O + 4 H(+)(in) = ADP + phosphate + 5 H(+)(out). Functionally, produces ATP from ADP in the presence of a proton gradient across the membrane. The alpha chain is a regulatory subunit. This is ATP synthase subunit alpha 1 from Vibrio campbellii (strain ATCC BAA-1116).